The chain runs to 384 residues: Anhydro-N-acetylmuramic acid kinase (384 aa).

9 to 16 (GTSYDAID) is an ATP binding site.

The protein belongs to the anhydro-N-acetylmuramic acid kinase family.

It catalyses the reaction 1,6-anhydro-N-acetyl-beta-muramate + ATP + H2O = N-acetyl-D-muramate 6-phosphate + ADP + H(+). The protein operates within amino-sugar metabolism; 1,6-anhydro-N-acetylmuramate degradation. Its pathway is cell wall biogenesis; peptidoglycan recycling. Catalyzes the specific phosphorylation of 1,6-anhydro-N-acetylmuramic acid (anhMurNAc) with the simultaneous cleavage of the 1,6-anhydro ring, generating MurNAc-6-P. Is required for the utilization of anhMurNAc either imported from the medium or derived from its own cell wall murein, and thus plays a role in cell wall recycling. This is Anhydro-N-acetylmuramic acid kinase from Streptomyces avermitilis (strain ATCC 31267 / DSM 46492 / JCM 5070 / NBRC 14893 / NCIMB 12804 / NRRL 8165 / MA-4680).